The primary structure comprises 312 residues: Olfactory receptor 51B6 (312 aa).

Residues 1–23 (MGLNKSASTFQLTGFPGMEKAHH) are Extracellular-facing. A glycan (N-linked (GlcNAc...) asparagine) is linked at Asn-4. The chain crosses the membrane as a helical span at residues 24-44 (WIFIPLLAAYISILLGNGTLL). Residues 45–52 (FLIRNDHN) lie on the Cytoplasmic side of the membrane. The chain crosses the membrane as a helical span at residues 53 to 73 (LHEPMYYFLAMLAATDLGVTL). The Extracellular portion of the chain corresponds to 74–97 (TTMPTVLGVLWLDHREIGHGACFS). A disulfide bond links Cys-95 and Cys-187. The helical transmembrane segment at 98 to 118 (QAYFIHTLSVMESGVLLAMAY) threads the bilayer. Residues 119 to 137 (DCFITIRSPLRYTSILTNT) are Cytoplasmic-facing. Residues 138–158 (QVMKIGVRVLTRAGLSIMPIV) traverse the membrane as a helical segment. Residues 159–194 (VRLHWFPYCRSHVLSHAFCLHQDVIKLACADITFNR) are Extracellular-facing. The chain crosses the membrane as a helical span at residues 195–215 (LYPVVVLFAMVLLDFLIIFFS). Residues 216 to 235 (YILILKTVMGIGSGGERAKA) are Cytoplasmic-facing. A helical transmembrane segment spans residues 236–256 (LNTCVSHICCILVFYVTVVCL). The Extracellular segment spans residues 257 to 271 (TFIHRFGKHVPHVVH). A helical membrane pass occupies residues 272–292 (ITMSYIHFLFPPFMNPFIYSI). Residues 293–312 (KTKQIQSGILRLFSLPHSRA) are Cytoplasmic-facing.

Belongs to the G-protein coupled receptor 1 family.

It localises to the cell membrane. In terms of biological role, odorant receptor. The polypeptide is Olfactory receptor 51B6 (OR51B6) (Homo sapiens (Human)).